A 95-amino-acid polypeptide reads, in one-letter code: Integration host factor subunit beta (95 aa).

A disordered region spans residues 56–76 (RAPRTGRNPKTGTSVELDGKY).

The protein belongs to the bacterial histone-like protein family. Heterodimer of an alpha and a beta chain.

In terms of biological role, this protein is one of the two subunits of integration host factor, a specific DNA-binding protein that functions in genetic recombination as well as in transcriptional and translational control. In Shewanella denitrificans (strain OS217 / ATCC BAA-1090 / DSM 15013), this protein is Integration host factor subunit beta.